Here is a 1150-residue protein sequence, read N- to C-terminus: RNA polymerase-associated protein CTR9 (1150 aa).

TPR repeat units follow at residues 143–176, 177–210, 212–245, 247–282, 320–353, 355–388, 432–464, 471–504, 594–627, 643–677, 679–711, 712–745, and 748–781; these read VRAW…NPKN, VLPL…CRHT, ADLR…EPYN, SAMC…QTDH, AEAF…NNGE, TLAH…LPNN, YEAC…LVTN, PEML…LEEQ, PIVW…IFNN, FEQL…QPKN, YAAN…TSEF, YDVW…FRKE, and STLQ…QLDN. Coiled coils occupy residues 848–916 and 972–1028; these read AEEA…NLRL and ERRE…AKQS. Residues 935–1150 form a disordered region; sequence KRRGGGGRKR…KKKVIESDSD (216 aa). A compositionally biased stretch (basic residues) spans 975-992; that stretch reads ERRKKDKAAKKASRKKRE. Composition is skewed to basic and acidic residues over residues 993-1005, 1013-1024, 1060-1084, and 1132-1150; these read RRDS…NRRD, EERDRKLQEKLS, DPRP…ETTT, and RDSD…SDSD.

As to quaternary structure, component of the PAF1 complex which consists of at least cdc-73, ctr-9, leo-1, pafo-1 and rtfo-1.

The protein localises to the nucleus. In terms of biological role, component of the PAF1 complex which is a multifunctional complex involved in transcription initiation via genetic interactions with TATA-binding proteins, elongation and transcription-coupled histone modification. Ctr-9 is required for epidermal microtubule organization during morphogenesis. This chain is RNA polymerase-associated protein CTR9, found in Caenorhabditis elegans.